Reading from the N-terminus, the 108-residue chain is Replication initiation control protein YabA (108 aa).

4 residues coordinate Zn(2+): His-82, Cys-84, Cys-98, and Cys-101.

It belongs to the YabA family. Homotetramer. Interacts with both DnaA and DnaN, acting as a bridge between these two proteins. Zn(2+) serves as cofactor.

It localises to the cytoplasm. It is found in the nucleoid. Functionally, involved in control of chromosome replication initiation. Inhibits the cooperative binding of DnaA to the oriC region, thus negatively regulating initiation of chromosome replication. Inhibits the ability of DnaA-ATP to form a helix on DNA; does not disassemble preformed DnaA-DNA helices. Decreases the residence time of DnaA on the chromosome at its binding sites (oriC, replication forks and promoter-binding sites). Tethers DnaA to the replication machinery via the DNA polymerase beta sliding clamp subunit (dnaN). Associates with oriC and other DnaA targets on the chromosome in a DnaA-dependent manner. The chain is Replication initiation control protein YabA from Streptococcus agalactiae serotype Ia (strain ATCC 27591 / A909 / CDC SS700).